A 278-amino-acid chain; its full sequence is Protein irg-2 (278 aa).

Residues 152-179 form a disordered region; sequence NSIRGQPFKSLQPENRTPTQVTGHQQES. Over residues 163 to 179 the composition is skewed to polar residues; that stretch reads QPENRTPTQVTGHQQES.

In terms of biological role, plays a role in innate immunity by conferring resistance to virulent strains of the Gram-negative bacterium P.aeruginosa via the zip-2 pathway and independent of the pmk-1 p38MAPK pathway. Induced as part of several immune responses to translational inhibition arising from endocytosis of ToxA during P.aeruginosa infection or exposure to exogenous cycloheximide. The polypeptide is Protein irg-2 (Caenorhabditis elegans).